Reading from the N-terminus, the 115-residue chain is NADH-ubiquinone oxidoreductase chain 3 (115 aa).

Helical transmembrane passes span 4 to 24, 55 to 75, and 84 to 104; these read ALTL…AFWL, FFLV…LLPL, and LTTM…SLAY.

It belongs to the complex I subunit 3 family. As to quaternary structure, core subunit of respiratory chain NADH dehydrogenase (Complex I) which is composed of 45 different subunits. Interacts with TMEM186. Interacts with TMEM242.

It is found in the mitochondrion inner membrane. The enzyme catalyses a ubiquinone + NADH + 5 H(+)(in) = a ubiquinol + NAD(+) + 4 H(+)(out). Functionally, core subunit of the mitochondrial membrane respiratory chain NADH dehydrogenase (Complex I) which catalyzes electron transfer from NADH through the respiratory chain, using ubiquinone as an electron acceptor. Essential for the catalytic activity of complex I. This Halichoerus grypus (Gray seal) protein is NADH-ubiquinone oxidoreductase chain 3.